A 305-amino-acid polypeptide reads, in one-letter code: GTPase Era (305 aa).

In terms of domain architecture, Era-type G spans 13–181 (RCGYVAIVGR…EKLVAERLPE (169 aa)). The interval 21 to 28 (GRPNVGKS) is G1. 21–28 (GRPNVGKS) serves as a coordination point for GTP. Residues 47–51 (QTTRH) form a G2 region. The G3 stretch occupies residues 68-71 (DTPG). Residues 68–72 (DTPGL) and 130–133 (NKTD) contribute to the GTP site. The G4 stretch occupies residues 130–133 (NKTD). Positions 160 to 162 (ISA) are G5. The 85-residue stretch at 204 to 288 (VREKIMRQLG…MLNLWVKVKG (85 aa)) folds into the KH type-2 domain.

The protein belongs to the TRAFAC class TrmE-Era-EngA-EngB-Septin-like GTPase superfamily. Era GTPase family. Monomer.

It localises to the cytoplasm. Its subcellular location is the cell inner membrane. Functionally, an essential GTPase that binds both GDP and GTP, with rapid nucleotide exchange. Plays a role in 16S rRNA processing and 30S ribosomal subunit biogenesis and possibly also in cell cycle regulation and energy metabolism. The sequence is that of GTPase Era from Pseudomonas aeruginosa (strain LESB58).